The chain runs to 263 residues: SPRY domain-containing SOCS box protein 2 (263 aa).

Polar residues predominate over residues M1–P16. Residues M1–W48 are disordered. The region spanning P26 to R221 is the B30.2/SPRY domain. One can recognise an SOCS box domain in the interval A222 to Q263.

The protein belongs to the SPSB family. As to quaternary structure, component of the probable ECS(SPSB2) E3 ubiquitin-protein ligase complex which contains CUL5, RNF7/RBX2, Elongin BC complex and SPSB2. Interacts with CUL5, RNF7, ELOB and ELOC. Interacts with MET. Interacts (via B30.2/SPRY domain) with PAWR; this interaction occurs in association with the Elongin BC complex. Interacts with NOS2. In terms of assembly, (Microbial infection) Interacts (via C-terminus) with HCV envelope glycoprotein E1. Interacts (via C-terminus) with HCV non-structural protein 5A; this interaction targets NS5A for ubiquitination and degradation.

The protein resides in the cytoplasm. It localises to the cytosol. Its pathway is protein modification; protein ubiquitination. In terms of biological role, substrate recognition component of a SCF-like ECS (Elongin BC-CUL2/5-SOCS-box protein) E3 ubiquitin-protein ligase complex which mediates the ubiquitination and subsequent proteasomal degradation of target proteins. Negatively regulates nitric oxide (NO) production and limits cellular toxicity in activated macrophages by mediating the ubiquitination and proteasomal degradation of NOS2. Acts as a bridge which links NOS2 with the ECS E3 ubiquitin ligase complex components ELOC and CUL5. This is SPRY domain-containing SOCS box protein 2 (SPSB2) from Homo sapiens (Human).